Here is a 173-residue protein sequence, read N- to C-terminus: Helix-loop-helix protein lin-22 (173 aa).

The tract at residues 21-34 (KKIKNKPLMEKKRR) is basic motif. Residues 21–78 (KKIKNKPLMEKKRRARINKSLSQLKQILIQDEHKNSIQHSKWEKADILEMAVEYLQQL) enclose the bHLH domain. The interval 35-78 (ARINKSLSQLKQILIQDEHKNSIQHSKWEKADILEMAVEYLQQL) is helix-loop-helix motif. Residues 83 to 95 (PCSLSPSTSSIST) are compositionally biased toward low complexity. The tract at residues 83–102 (PCSLSPSTSSISTPPTPKEE) is disordered.

In terms of tissue distribution, expressed mostly in the seam (stem) cells and hypodermis (hyp7), but also to a lesser extent in the intestine.

The protein localises to the nucleus. Probable transcription factor. During development, required for cell fate specification, probably by promoting or repressing expression of genes involved in specific cell fate. Involved in specifying lineages derived from the epidermal stem cells of the lateral ectoderm, known as seam cells. Modulates symmetric divisions of seam cells, perhaps in concert with the Wnt signaling pathway. May repress expression of homeobox genes mab-5, egl-5 and lin-39. In Caenorhabditis elegans, this protein is Helix-loop-helix protein lin-22.